A 254-amino-acid polypeptide reads, in one-letter code: Probable protein ABIL5 (254 aa).

Residues 1–26 form a disordered region; it reads MEVAEAGVDGVAGRRQQEEASGAAPF.

Belongs to the ABI family. Binds SCAR.

Its subcellular location is the cytoplasm. The protein localises to the cytoskeleton. In terms of biological role, involved in regulation of actin and microtubule organization. Part of a WAVE complex that activates the Arp2/3 complex. This chain is Probable protein ABIL5, found in Oryza sativa subsp. japonica (Rice).